A 446-amino-acid chain; its full sequence is Phosphoglucosamine mutase (446 aa).

S104 functions as the Phosphoserine intermediate in the catalytic mechanism. Residues S104, D241, D243, and D245 each coordinate Mg(2+). S104 bears the Phosphoserine mark.

The protein belongs to the phosphohexose mutase family. Requires Mg(2+) as cofactor. Activated by phosphorylation.

The catalysed reaction is alpha-D-glucosamine 1-phosphate = D-glucosamine 6-phosphate. Functionally, catalyzes the conversion of glucosamine-6-phosphate to glucosamine-1-phosphate. The protein is Phosphoglucosamine mutase of Teredinibacter turnerae (strain ATCC 39867 / T7901).